Here is a 415-residue protein sequence, read N- to C-terminus: Procollagen C-endopeptidase enhancer 2 (415 aa).

The N-terminal stretch at 1 to 23 (MRGANAWAPLCLLLAAATQLSRQ) is a signal peptide. Cystine bridges form between Cys33-Cys59, Cys86-Cys107, Cys154-Cys181, Cys208-Cys231, Cys297-Cys364, Cys301-Cys367, and Cys312-Cys415. CUB domains are found at residues 33 to 144 (CGGI…FSAA) and 154 to 268 (CGGL…YIFR). One can recognise an NTR domain in the interval 297–415 (CQQKCRRTGT…LLDALKNKQC (119 aa)). Residue Asn355 is glycosylated (N-linked (GlcNAc...) asparagine).

In terms of assembly, interacts with heparin with high affinity, and type I or II collagen. In terms of processing, O-glycosylated; contains sialic acid. Highly expressed in the heart, trabecular meshwork, pituitary gland, bladder, mammary gland, trachea and placenta and weakly expressed in the brain. Expressed in cartilage.

The protein localises to the secreted. Its function is as follows. Binds to the C-terminal propeptide of types I and II procollagens and may enhance the cleavage of that propeptide by BMP1. The sequence is that of Procollagen C-endopeptidase enhancer 2 (PCOLCE2) from Homo sapiens (Human).